The following is a 366-amino-acid chain: Histidinol-phosphate aminotransferase (366 aa).

K231 is modified (N6-(pyridoxal phosphate)lysine).

It belongs to the class-II pyridoxal-phosphate-dependent aminotransferase family. Histidinol-phosphate aminotransferase subfamily. The cofactor is pyridoxal 5'-phosphate.

It catalyses the reaction L-histidinol phosphate + 2-oxoglutarate = 3-(imidazol-4-yl)-2-oxopropyl phosphate + L-glutamate. It participates in amino-acid biosynthesis; L-histidine biosynthesis; L-histidine from 5-phospho-alpha-D-ribose 1-diphosphate: step 7/9. In Halobacterium salinarum (strain ATCC 29341 / DSM 671 / R1), this protein is Histidinol-phosphate aminotransferase.